The sequence spans 95 residues: Co-chaperonin GroES (95 aa).

Belongs to the GroES chaperonin family. In terms of assembly, heptamer of 7 subunits arranged in a ring. Interacts with the chaperonin GroEL.

It is found in the cytoplasm. In terms of biological role, together with the chaperonin GroEL, plays an essential role in assisting protein folding. The GroEL-GroES system forms a nano-cage that allows encapsulation of the non-native substrate proteins and provides a physical environment optimized to promote and accelerate protein folding. GroES binds to the apical surface of the GroEL ring, thereby capping the opening of the GroEL channel. The polypeptide is Co-chaperonin GroES (Novosphingobium aromaticivorans (strain ATCC 700278 / DSM 12444 / CCUG 56034 / CIP 105152 / NBRC 16084 / F199)).